The primary structure comprises 375 residues: 23S rRNA (uracil(747)-C(5))-methyltransferase RlmC (375 aa).

[4Fe-4S] cluster is bound by residues Cys3, Cys11, Cys14, and Cys87. Positions 212, 241, 262, and 307 each coordinate S-adenosyl-L-methionine. The active-site Nucleophile is the Cys334.

The protein belongs to the class I-like SAM-binding methyltransferase superfamily. RNA M5U methyltransferase family. RlmC subfamily.

It carries out the reaction uridine(747) in 23S rRNA + S-adenosyl-L-methionine = 5-methyluridine(747) in 23S rRNA + S-adenosyl-L-homocysteine + H(+). Functionally, catalyzes the formation of 5-methyl-uridine at position 747 (m5U747) in 23S rRNA. The protein is 23S rRNA (uracil(747)-C(5))-methyltransferase RlmC of Cronobacter sakazakii (strain ATCC BAA-894) (Enterobacter sakazakii).